Consider the following 240-residue polypeptide: PF03932 family protein CutC (240 aa).

Belongs to the CutC family.

It is found in the cytoplasm. This chain is PF03932 family protein CutC, found in Xanthomonas axonopodis pv. citri (strain 306).